A 466-amino-acid polypeptide reads, in one-letter code: Asparagine--tRNA ligase (466 aa).

Belongs to the class-II aminoacyl-tRNA synthetase family. Homodimer.

The protein resides in the cytoplasm. It catalyses the reaction tRNA(Asn) + L-asparagine + ATP = L-asparaginyl-tRNA(Asn) + AMP + diphosphate + H(+). This is Asparagine--tRNA ligase from Salmonella paratyphi A (strain ATCC 9150 / SARB42).